Here is a 337-residue protein sequence, read N- to C-terminus: Phenylalanine--tRNA ligase alpha subunit (337 aa).

E252 contacts Mg(2+).

The protein belongs to the class-II aminoacyl-tRNA synthetase family. Phe-tRNA synthetase alpha subunit type 1 subfamily. In terms of assembly, tetramer of two alpha and two beta subunits. Requires Mg(2+) as cofactor.

The protein resides in the cytoplasm. The catalysed reaction is tRNA(Phe) + L-phenylalanine + ATP = L-phenylalanyl-tRNA(Phe) + AMP + diphosphate + H(+). The sequence is that of Phenylalanine--tRNA ligase alpha subunit from Saccharophagus degradans (strain 2-40 / ATCC 43961 / DSM 17024).